An 803-amino-acid chain; its full sequence is E3 ubiquitin-protein ligase UHRF2 (803 aa).

The region spanning 1–78 (MWIQVRTIDG…IQLLVRPDSS (78 aa)) is the Ubiquitin-like domain. Composition is skewed to polar residues over residues 79 to 96 (LPSTSKQNDAQVKPSSHN), 106 to 115 (GGSSSQPSTS), 167 to 181 (KNGSSYKRTNGNVNH), and 189 to 200 (KLDNVPSTSNSD). Disordered regions lie at residues 79–115 (LPSTSKQNDAQVKPSSHNPPKVKKTARGGSSSQPSTS) and 154–200 (RASD…SNSD). Residues 118–312 (TCLIDPGFGL…VDEIFKIEKP (195 aa)) are required for interaction with histone H3. The interval 195–289 (STSNSDSVAA…KEVRVKVFLG (95 aa)) is interaction with PCNP. The PHD-type zinc finger occupies 340-396 (DKTCHMCSCHKCGEKRDPNMQLLCDECNMAYHIYCLSPPLDKVPEEEYWYCPSCKTD). Residues 415-645 (KMPSASTESR…LQYPAGYPSE (231 aa)) form a methyl-CpG binding and interaction with HDAC1 region. The region spanning 449 to 613 (GPIPGIPVGS…FLVWRYLLRR (165 aa)) is the YDG domain. Residues 643-676 (PSEKEGKKTKGQSKKQGSEATKRPASDDECPGDS) are disordered. Residues 658–668 (QGSEATKRPAS) show a composition bias toward basic and acidic residues. S668 carries the phosphoserine modification. An RING-type zinc finger spans residues 734–773 (CVCCQELVYQPVTTECFHNVCKDCLQRSFKAQVFSCPACR).

In terms of assembly, homodimer; disulfide-linked. Binds methylated CpG containing oligonucleotides. Interacts with H3; the interaction has a preference for the 'Lys-9' trimethylated form of H3 (H3K9me3). Interacts with PCNP. Interacts with HDAC1. Interacts directly with CCNE1; the interaction ubiquitinates CCNE1 and appears independent of CCNE1 phosphorylation. Interacts with CCND1; the interaction ubiquitinates CCND1 and appears independent of CCND1 phosphorylation. Interacts with p53/TP53 and RB1. Interacts with UBE2I. Interacts with ZNF618. Interacts with UHRF1. Interacts with FANCD2. Interacts with ATR. Interacts with PCNA. Post-translationally, may be autoubiquitinated; which may lead to proteasomal degradation. Phosphorylated. Phosphorylation may be mediated by CDK2. In terms of processing, autosumoylated. In terms of tissue distribution, mostly detected in several tissues, including the thymus, spleen, lung, adrenal gland, and ovary. In addition, found in several tissues in the brain (cerebellum, hippocampus, and cerebral cortex).

The protein resides in the nucleus. Its subcellular location is the chromosome. The enzyme catalyses S-ubiquitinyl-[E2 ubiquitin-conjugating enzyme]-L-cysteine + [acceptor protein]-L-lysine = [E2 ubiquitin-conjugating enzyme]-L-cysteine + N(6)-ubiquitinyl-[acceptor protein]-L-lysine.. Its pathway is protein modification; protein ubiquitination. Its activity is regulated as follows. E3 ligase activity is robustly activated by 5-hydroxy-methylcytosine. In terms of biological role, E3 ubiquitin ligase that plays important roles in DNA methylation, histone modifications, cell cycle and DNA repair. Acts as a specific reader for 5-hydroxymethylcytosine (5hmC) and thereby recruits various substrates to these sites to ubiquitinate them. This activity also allows the maintenance of 5mC levels at specific genomic loci and regulates neuron-related gene expression. Participates in cell cycle regulation by ubiquitinating cyclins CCND1 and CCNE1 and thus inducing G1 arrest. Also ubiquitinates PCNP leading to its degradation by the proteasome. Plays an active role in DNA damage repair by ubiquitinating p21/CDKN1A leading to its proteasomal degradation. Also promotes DNA repair by acting as an interstrand cross-links (ICLs) sensor. Mechanistically, cooperates with UHRF1 to ensure recruitment of FANCD2 to ICLs, leading to FANCD2 monoubiquitination and subsequent activation. Contributes to UV-induced DNA damage response by physically interacting with ATR in response to irradiation, thereby promoting ATR activation. The chain is E3 ubiquitin-protein ligase UHRF2 (Uhrf2) from Mus musculus (Mouse).